Here is a 383-residue protein sequence, read N- to C-terminus: L-Ala-D/L-Glu epimerase (383 aa).

Substrate-binding positions include arginine 68, tyrosine 94, and 198–200; that span reads KVK. The Mg(2+) site is built by aspartate 224, glutamate 251, and aspartate 276. Residues lysine 298, 326–328, and 348–350 contribute to the substrate site; these read CMT and DLD.

It belongs to the mandelate racemase/muconate lactonizing enzyme family. Requires Mg(2+) as cofactor.

It carries out the reaction L-alanyl-L-glutamate = L-alanyl-D-glutamate. Functionally, catalyzes the epimerization of L-Ala-D-Glu to L-Ala-L-Glu and may play a role in the metabolism of the murein peptide, of which L-Ala-D-Glu is a component. Is also able to catalyze the epimerization of L-Ala-D-Asp, L-Ala-L-Glu, L-Ala-L-Ser, L-Ala-L-Pro, L-Ala-L-L-Val, L-Ala-L-Thr, L-Ala-L-Leu, L-Ala-L-Ile and L-Gly-L-Glu (in vitro). The protein is L-Ala-D/L-Glu epimerase of Bacteroides thetaiotaomicron (strain ATCC 29148 / DSM 2079 / JCM 5827 / CCUG 10774 / NCTC 10582 / VPI-5482 / E50).